Here is a 427-residue protein sequence, read N- to C-terminus: tRNA(Ile)-lysidine synthase (427 aa).

29–34 (SGGVDS) contacts ATP.

The protein belongs to the tRNA(Ile)-lysidine synthase family.

It is found in the cytoplasm. It carries out the reaction cytidine(34) in tRNA(Ile2) + L-lysine + ATP = lysidine(34) in tRNA(Ile2) + AMP + diphosphate + H(+). In terms of biological role, ligates lysine onto the cytidine present at position 34 of the AUA codon-specific tRNA(Ile) that contains the anticodon CAU, in an ATP-dependent manner. Cytidine is converted to lysidine, thus changing the amino acid specificity of the tRNA from methionine to isoleucine. This is tRNA(Ile)-lysidine synthase from Thermosipho africanus (strain TCF52B).